The sequence spans 353 residues: 11-beta-hydroxysteroid dehydrogenase B (353 aa).

Residues 10 to 30 (LFVPPASLITLAFSWPALCFP) form a helical; Signal-anchor for type II membrane protein membrane-spanning segment. The Proline-knob motif lies at 13-26 (PPASLITLAFSWPA). NADP(+)-binding positions include 54 to 80 (GASS…VARR) and D105. S184 contacts substrate. The active-site Proton acceptor is the Y197. Residues 197-201 (YAAAK) and K201 each bind NADP(+).

This sequence belongs to the short-chain dehydrogenases/reductases (SDR) family. As to expression, expressed in seeds (at protein level).

It is found in the lipid droplet. It localises to the membrane. It catalyses the reaction an 11beta-hydroxysteroid + NADP(+) = an 11-oxosteroid + NADPH + H(+). Functionally, has dehydrogenase activity against 11 beta-hydroxysteroid and 17 beta-hydroxysteroid. May be involved in signal transduction regulated by various sterols. In Arachis hypogaea (Peanut), this protein is 11-beta-hydroxysteroid dehydrogenase B.